Here is a 251-residue protein sequence, read N- to C-terminus: Probable transcriptional regulatory protein SYNPCC7002_A0851 (251 aa).

The 122-residue stretch at 20–141 (RILVVEDEAV…ELVARCRALL (122 aa)) folds into the Response regulatory domain. D76 carries the 4-aspartylphosphate modification. The ompR/PhoB-type DNA-binding region spans 153 to 251 (NSVRQFKDIS…TVRGFGYRFG (99 aa)).

Post-translationally, phosphorylation.

The sequence is that of Probable transcriptional regulatory protein SYNPCC7002_A0851 from Picosynechococcus sp. (strain ATCC 27264 / PCC 7002 / PR-6) (Agmenellum quadruplicatum).